The primary structure comprises 339 residues: MSDEITILPTTVIGSYPRPKWLRETIRLHRAGKVNQEDLEEAFNDAVVTVVRDHQEAGIDVPTDGEMRRDEMVEFFAERLSGFKFYGHVRVWGDHYYRKPSVTGKIKYNNPMLLDEVNFAKSVSYTQNLKVTITGPYTISEWSYNEYYKTQRDMAFDLAKVINQEIKNLVDIGIKVIQVDEPAIHTRKEDVEWAIDSINESIKGVNVKVVLHVCYGEYSYLEPHLDKLKVDQINLALKNYNYTPVKLFKKWDREIGVGVIDVHNRKIESVEEVAEDLRKLLEYFKPEMVWVNPDCGLKLLPRKIALQKLINMVKGTLIVREELKKKGYTNTTLKPLINR.

Zn(2+)-binding residues include His212, Cys214, and Cys295.

This sequence belongs to the archaeal MetE family. Zn(2+) is required as a cofactor.

Its pathway is amino-acid biosynthesis; L-methionine biosynthesis via de novo pathway. Its function is as follows. Catalyzes the transfer of a methyl group to L-homocysteine resulting in methionine formation. The physiological methyl donor is unknown. The polypeptide is Methionine synthase (Sulfolobus acidocaldarius (strain ATCC 33909 / DSM 639 / JCM 8929 / NBRC 15157 / NCIMB 11770)).